Reading from the N-terminus, the 509-residue chain is Cobyric acid synthase (509 aa).

Positions 262–459 (EIKVGIIKLP…IHGIFENDSW (198 aa)) constitute a GATase cobBQ-type domain. Catalysis depends on Cys-343, which acts as the Nucleophile. The active site involves His-451.

This sequence belongs to the CobB/CobQ family. CobQ subfamily.

The protein operates within cofactor biosynthesis; adenosylcobalamin biosynthesis. In terms of biological role, catalyzes amidations at positions B, D, E, and G on adenosylcobyrinic A,C-diamide. NH(2) groups are provided by glutamine, and one molecule of ATP is hydrogenolyzed for each amidation. The polypeptide is Cobyric acid synthase (Prochlorococcus marinus (strain MIT 9301)).